A 561-amino-acid polypeptide reads, in one-letter code: Putative ABC transporter ATP-binding protein SAV_5847 (561 aa).

Positions 2 to 243 constitute an ABC transporter 1 domain; that stretch reads IRFEDVSVTY…SPVYPPVVDL (242 aa). 36 to 43 provides a ligand contact to ATP; it reads GPSGVGKS. The disordered stretch occupies residues 268 to 299; it reads ERLAATETPTPTATATATAAPAPSPSRPRRPR. The span at 272 to 288 shows a compositional bias: low complexity; it reads ATETPTPTATATATAAP. The ABC transporter 2 domain maps to 315 to 543; the sequence is AAVEALAVRR…SPSFAPQVTK (229 aa). 347–354 contributes to the ATP binding site; sequence GRNGAGKS.

It belongs to the ABC transporter superfamily.

It localises to the cell membrane. Probably part of an ABC transporter complex. Responsible for energy coupling to the transport system. In Streptomyces avermitilis (strain ATCC 31267 / DSM 46492 / JCM 5070 / NBRC 14893 / NCIMB 12804 / NRRL 8165 / MA-4680), this protein is Putative ABC transporter ATP-binding protein SAV_5847.